The primary structure comprises 378 residues: Queuine tRNA-ribosyltransferase (378 aa).

Catalysis depends on Asp-90, which acts as the Proton acceptor. Residues 90-94 (DSGGY), Asp-152, Gln-194, and Gly-223 contribute to the substrate site. Residues 254 to 260 (GVGKPED) are RNA binding. The active-site Nucleophile is Asp-273. Residues 278–282 (TRNAR) are RNA binding; important for wobble base 34 recognition. Cys-311, Cys-313, Cys-316, and His-342 together coordinate Zn(2+).

Belongs to the queuine tRNA-ribosyltransferase family. Homodimer. Within each dimer, one monomer is responsible for RNA recognition and catalysis, while the other monomer binds to the replacement base PreQ1. The cofactor is Zn(2+).

The enzyme catalyses 7-aminomethyl-7-carbaguanine + guanosine(34) in tRNA = 7-aminomethyl-7-carbaguanosine(34) in tRNA + guanine. It functions in the pathway tRNA modification; tRNA-queuosine biosynthesis. Its function is as follows. Catalyzes the base-exchange of a guanine (G) residue with the queuine precursor 7-aminomethyl-7-deazaguanine (PreQ1) at position 34 (anticodon wobble position) in tRNAs with GU(N) anticodons (tRNA-Asp, -Asn, -His and -Tyr). Catalysis occurs through a double-displacement mechanism. The nucleophile active site attacks the C1' of nucleotide 34 to detach the guanine base from the RNA, forming a covalent enzyme-RNA intermediate. The proton acceptor active site deprotonates the incoming PreQ1, allowing a nucleophilic attack on the C1' of the ribose to form the product. After dissociation, two additional enzymatic reactions on the tRNA convert PreQ1 to queuine (Q), resulting in the hypermodified nucleoside queuosine (7-(((4,5-cis-dihydroxy-2-cyclopenten-1-yl)amino)methyl)-7-deazaguanosine). This chain is Queuine tRNA-ribosyltransferase, found in Aquifex aeolicus (strain VF5).